Reading from the N-terminus, the 168-residue chain is ATP synthase subunit b (168 aa).

A helical membrane pass occupies residues 11–31; it reads EISIINTLWYLIVFSILLLAV.

The protein belongs to the ATPase B chain family. As to quaternary structure, F-type ATPases have 2 components, F(1) - the catalytic core - and F(0) - the membrane proton channel. F(1) has five subunits: alpha(3), beta(3), gamma(1), delta(1), epsilon(1). F(0) has three main subunits: a(1), b(2) and c(10-14). The alpha and beta chains form an alternating ring which encloses part of the gamma chain. F(1) is attached to F(0) by a central stalk formed by the gamma and epsilon chains, while a peripheral stalk is formed by the delta and b chains.

It localises to the cell membrane. In terms of biological role, f(1)F(0) ATP synthase produces ATP from ADP in the presence of a proton or sodium gradient. F-type ATPases consist of two structural domains, F(1) containing the extramembraneous catalytic core and F(0) containing the membrane proton channel, linked together by a central stalk and a peripheral stalk. During catalysis, ATP synthesis in the catalytic domain of F(1) is coupled via a rotary mechanism of the central stalk subunits to proton translocation. Its function is as follows. Component of the F(0) channel, it forms part of the peripheral stalk, linking F(1) to F(0). The sequence is that of ATP synthase subunit b from Lactobacillus delbrueckii subsp. bulgaricus (strain ATCC 11842 / DSM 20081 / BCRC 10696 / JCM 1002 / NBRC 13953 / NCIMB 11778 / NCTC 12712 / WDCM 00102 / Lb 14).